Reading from the N-terminus, the 117-residue chain is Large ribosomal subunit protein bL19 (117 aa).

It belongs to the bacterial ribosomal protein bL19 family.

This protein is located at the 30S-50S ribosomal subunit interface and may play a role in the structure and function of the aminoacyl-tRNA binding site. The chain is Large ribosomal subunit protein bL19 from Thioalkalivibrio sulfidiphilus (strain HL-EbGR7).